Reading from the N-terminus, the 389-residue chain is Chalcone synthase 6 (389 aa).

Cysteine 164 is a catalytic residue.

This sequence belongs to the thiolase-like superfamily. Chalcone/stilbene synthases family.

The enzyme catalyses (E)-4-coumaroyl-CoA + 3 malonyl-CoA + 3 H(+) = 2',4,4',6'-tetrahydroxychalcone + 3 CO2 + 4 CoA. The protein operates within secondary metabolite biosynthesis; flavonoid biosynthesis. The primary product of this enzyme is 4,2',4',6'-tetrahydroxychalcone (also termed naringenin-chalcone or chalcone) which can under specific conditions spontaneously isomerize into naringenin. The protein is Chalcone synthase 6 (CHS6) of Trifolium subterraneum (Subterranean clover).